We begin with the raw amino-acid sequence, 301 residues long: Probable alpha-L-glutamate ligase (301 aa).

One can recognise an ATP-grasp domain in the interval 104–287 (LQLLSRRGIG…VAGMIIEHLE (184 aa)). ATP is bound by residues lysine 141, 178 to 179 (EY), aspartate 187, and 211 to 213 (RSN). Residues aspartate 248, glutamate 260, and asparagine 262 each contribute to the Mg(2+) site. Residues aspartate 248, glutamate 260, and asparagine 262 each coordinate Mn(2+).

Belongs to the RimK family. It depends on Mg(2+) as a cofactor. The cofactor is Mn(2+).

This chain is Probable alpha-L-glutamate ligase, found in Pseudomonas putida (strain GB-1).